A 326-amino-acid chain; its full sequence is Vitamin B12 import system permease protein BtuC (326 aa).

The next 9 membrane-spanning stretches (helical) occupy residues 17–39 (LSLSLLVLLATLLSLCAGEQWIA), 59–81 (RTLAVLLVGAALALSGAVMQALF), 88–107 (PGLLGVSNGAGVGLIAAVLL), 111–133 (QLPGWALGLCAIAGALIITLILL), 146–168 (LLAGVALGIICSALMTWAIYFST), 188–205 (WQQSWLMIALIPVLIWIC), 242–264 (MVGVSVAMAGAIGFIGLVIPHIL), 274–296 (VLLPGCALAGAIALLLADVVARL), and 303–322 (LPIGVVTATLGAPVFIWLLL).

The protein belongs to the binding-protein-dependent transport system permease family. FecCD subfamily. As to quaternary structure, the complex is composed of two ATP-binding proteins (BtuD), two transmembrane proteins (BtuC) and a solute-binding protein (BtuF).

The protein localises to the cell inner membrane. Functionally, part of the ABC transporter complex BtuCDF involved in vitamin B12 import. Involved in the translocation of the substrate across the membrane. The sequence is that of Vitamin B12 import system permease protein BtuC from Salmonella typhi.